The following is a 339-amino-acid chain: MTIQKNWQELIRPNKLQVTAGSDATRFATLVAEPLERGFGQTLGNALRRVLLSSLQGAAVQSVHIDGVLHEFSSIAGVREDVTDIVLNIKDISLKMQGEGPKRMVVKKQGPGVVTAGDIQTVGDIVVLNPDLQICTLDEGAEIRMEFTVNTGKGYVAAERNRPEDAPIGLIPVDSLYSPVRKVSYKVENTREGQILDYDKLTMTVETNGALTPDDAVAFAARILQDQLNVFVNFEEPRKEVTQEIIPDLAFNPAFLKKVDELELSVRSANCLKNDNIVYIGDLVQKSEAEMLRTPNFGRKSLNEIKEVLAQMGLHLGMEVPGWPPENIDELAKRFEDHY.

The alpha N-terminal domain (alpha-NTD) stretch occupies residues 1 to 235 (MTIQKNWQEL…DQLNVFVNFE (235 aa)). Positions 251–339 (FNPAFLKKVD…ELAKRFEDHY (89 aa)) are alpha C-terminal domain (alpha-CTD).

This sequence belongs to the RNA polymerase alpha chain family. In terms of assembly, homodimer. The RNAP catalytic core consists of 2 alpha, 1 beta, 1 beta' and 1 omega subunit. When a sigma factor is associated with the core the holoenzyme is formed, which can initiate transcription.

The enzyme catalyses RNA(n) + a ribonucleoside 5'-triphosphate = RNA(n+1) + diphosphate. DNA-dependent RNA polymerase catalyzes the transcription of DNA into RNA using the four ribonucleoside triphosphates as substrates. The protein is DNA-directed RNA polymerase subunit alpha of Rhodopseudomonas palustris (strain HaA2).